Consider the following 205-residue polypeptide: Protein N-terminal glutamine amidohydrolase (205 aa).

Active-site residues include C20, H74, and D90.

It belongs to the NTAQ1 family. As to quaternary structure, monomer.

It carries out the reaction N-terminal L-glutaminyl-[protein] + H2O = N-terminal L-glutamyl-[protein] + NH4(+). Mediates the side-chain deamidation of N-terminal glutamine residues to glutamate, an important step in N-end rule pathway of protein degradation. Conversion of the resulting N-terminal glutamine to glutamate renders the protein susceptible to arginylation, polyubiquitination and degradation as specified by the N-end rule. Does not act on substrates with internal or C-terminal glutamine and does not act on non-glutamine residues in any position. This is Protein N-terminal glutamine amidohydrolase (tun) from Drosophila melanogaster (Fruit fly).